A 352-amino-acid chain; its full sequence is Protein RecA (352 aa).

67-74 (GPESSGKT) provides a ligand contact to ATP. The tract at residues 330 to 352 (STPKPEAESQEKAAAAQDDDSLV) is disordered.

The protein belongs to the RecA family.

The protein localises to the cytoplasm. In terms of biological role, can catalyze the hydrolysis of ATP in the presence of single-stranded DNA, the ATP-dependent uptake of single-stranded DNA by duplex DNA, and the ATP-dependent hybridization of homologous single-stranded DNAs. It interacts with LexA causing its activation and leading to its autocatalytic cleavage. The sequence is that of Protein RecA from Chromohalobacter salexigens (strain ATCC BAA-138 / DSM 3043 / CIP 106854 / NCIMB 13768 / 1H11).